The primary structure comprises 255 residues: uncharacterized protein (255 aa).

The region spanning 4-59 is the HTH deoR-type domain; that stretch reads RNERLNLIRKRVDQYGQVAVKDLAIFLQVTPETVRKDLETLENDKLITRTHGGAIQ. The H-T-H motif DNA-binding region spans 21–40; it reads VAVKDLAIFLQVTPETVRKD.

This is an uncharacterized protein from Staphylococcus epidermidis (strain ATCC 12228 / FDA PCI 1200).